Consider the following 451-residue polypeptide: UPF0210 protein CA_C0479 (451 aa).

Belongs to the UPF0210 family. In terms of assembly, homodimer.

The chain is UPF0210 protein CA_C0479 from Clostridium acetobutylicum (strain ATCC 824 / DSM 792 / JCM 1419 / IAM 19013 / LMG 5710 / NBRC 13948 / NRRL B-527 / VKM B-1787 / 2291 / W).